The following is a 256-amino-acid chain: Fumarate reductase iron-sulfur subunit (256 aa).

The 91-residue stretch at 7-97 folds into the 2Fe-2S ferredoxin-type domain; sequence MNVEVLRYNP…HMRIEPLANF (91 aa). Tyr-14 contacts a menaquinone. Positions 58, 63, 66, and 78 each coordinate [2Fe-2S] cluster. Positions 151–180 constitute a 4Fe-4S ferredoxin-type domain; it reads LEKYRQFSMCINCGLCYAACPQFGLNPEFL. [4Fe-4S] cluster-binding residues include Cys-160, Cys-163, and Cys-166. Residues Cys-170, Cys-216, and Cys-222 each contribute to the [3Fe-4S] cluster site. A [4Fe-4S] cluster-binding site is contributed by Cys-226. 237-240 provides a ligand contact to a menaquinone; the sequence is NQGK.

Belongs to the succinate dehydrogenase/fumarate reductase iron-sulfur protein family. In terms of assembly, fumarate dehydrogenase forms part of an enzyme complex containing four subunits: a flavoprotein, an iron-sulfur, and two hydrophobic anchor proteins. Requires [2Fe-2S] cluster as cofactor. The cofactor is [3Fe-4S] cluster. [4Fe-4S] cluster is required as a cofactor.

The protein localises to the cell inner membrane. It carries out the reaction a quinone + succinate = fumarate + a quinol. The enzyme catalyses a menaquinone + succinate = a menaquinol + fumarate. This chain is Fumarate reductase iron-sulfur subunit (frdB), found in Haemophilus influenzae (strain ATCC 51907 / DSM 11121 / KW20 / Rd).